Here is a 481-residue protein sequence, read N- to C-terminus: 1-acylglycerol-3-phosphate O-acyltransferase PNPLA3 (481 aa).

The Cytoplasmic portion of the chain corresponds to 1-41; it reads MYDAERGWSLSFAGCGFLGFYHVGATRCLSEHAPHLLRDAR. A PNPLA domain is found at 10–179; the sequence is LSFAGCGFLG…SDNVPFIDAK (170 aa). Positions 14–19 match the GXGXXG motif; sequence GCGFLG. A helical; Signal-anchor for type II membrane protein membrane pass occupies residues 42 to 62; the sequence is MLFGASAGALHCVGVLSGIPL. A GXSXG motif is present at residues 45 to 49; that stretch reads GASAG. The Nucleophile role is filled by Ser47. Topologically, residues 63 to 481 are lumenal; the sequence is EQTLQVLSDL…FPSFSLEKSL (419 aa). An N-linked (GlcNAc...) asparagine glycan is attached at Asn89. The active-site Proton acceptor is Asp166. The DGA/G signature appears at 166–168; sequence DGG. Residue Asn280 is glycosylated (N-linked (GlcNAc...) asparagine).

The protein resides in the membrane. It is found in the lipid droplet. It catalyses the reaction a 1-acyl-sn-glycero-3-phosphate + an acyl-CoA = a 1,2-diacyl-sn-glycero-3-phosphate + CoA. The enzyme catalyses a triacylglycerol + H2O = a diacylglycerol + a fatty acid + H(+). It carries out the reaction a 1-acylglycerol + a 1,3-diacylglycerol = a triacylglycerol + glycerol. The catalysed reaction is a 1-acylglycerol + a 1,2-diacylglycerol = a triacylglycerol + glycerol. It catalyses the reaction 2 a 1-acylglycerol = a 1,2-diacylglycerol + glycerol. The enzyme catalyses 1-(9Z-octadecenoyl)-sn-glycero-3-phosphate + (9Z)-octadecenoyl-CoA = 1,2-di-(9Z-octadecenoyl)-sn-glycero-3-phosphate + CoA. It carries out the reaction 1-(9Z-octadecenoyl)-sn-glycero-3-phosphate + hexadecanoyl-CoA = 1-(9Z)-octadecenoyl-2-hexadecanoyl-sn-glycero-3-phosphate + CoA. The catalysed reaction is 1-(9Z-octadecenoyl)-sn-glycero-3-phosphate + (9Z,12Z)-octadecadienoyl-CoA = 1-(9Z)-octadecenoyl-2-(9Z,12Z)-octadecadienoyl-sn-glycero-3-phosphate + CoA. It catalyses the reaction 1-(9Z-octadecenoyl)-sn-glycero-3-phosphate + (5Z,8Z,11Z,14Z)-eicosatetraenoyl-CoA = 1-(9Z)-octadecenoyl-2-(5Z,8Z,11Z,14Z)-eicosatetraenoyl-sn-glycero-3-phosphate + CoA. The enzyme catalyses 2 1-(9Z-octadecenoyl)-glycerol = 1,2-di-(9Z-octadecenoyl)-glycerol + glycerol. It carries out the reaction 1-(9Z-octadecenoyl)-glycerol + 1,2-di-(9Z-octadecenoyl)-glycerol = 1,2,3-tri-(9Z-octadecenoyl)-glycerol + glycerol. The catalysed reaction is 1-(9Z-octadecenoyl)-glycerol + 1,3-di-(9Z-octadecenoyl)-glycerol = 1,2,3-tri-(9Z-octadecenoyl)-glycerol + glycerol. It catalyses the reaction 1,2,3-tri-(9Z-octadecenoyl)-glycerol + H2O = 1,3-di-(9Z-octadecenoyl)-glycerol + (9Z)-octadecenoate + H(+). The enzyme catalyses a 1,2-diacyl-sn-glycero-3-phosphocholine + H2O = a 1-acyl-sn-glycero-3-phosphocholine + a fatty acid + H(+). It functions in the pathway phospholipid metabolism. Its pathway is glycerolipid metabolism. Its activity is regulated as follows. The triglyceride lipase activity is inhibited by BEL ((E)-6-(bromomethylene)-3-(1-naphthalenyl)-2H-tetrahydropyran-2-one), a suicide substrate inhibitor. In terms of biological role, specifically catalyzes coenzyme A (CoA)-dependent acylation of 1-acyl-sn-glycerol 3-phosphate (2-lysophosphatidic acid/LPA) to generate phosphatidic acid (PA), an important metabolic intermediate and precursor for both triglycerides and glycerophospholipids. Does not esterify other lysophospholipids. Acyl donors are long chain (at least C16) fatty acyl-CoAs: arachidonoyl-CoA, linoleoyl-CoA, oleoyl-CoA and at a lesser extent palmitoyl-CoA. Additionally possesses low triacylglycerol lipase and CoA-independent acylglycerol transacylase activities and thus may play a role in acyl-chain remodeling of triglycerides. In vitro may express hydrolytic activity against glycerolipids triacylglycerol, diacylglycerol and monoacylglycerol, with a strong preference for oleic acid as the acyl moiety. However, the triacylglycerol hydrolase activity is controversial and may be very low. Possesses phospholipase A2 activity. The chain is 1-acylglycerol-3-phosphate O-acyltransferase PNPLA3 from Homo sapiens (Human).